We begin with the raw amino-acid sequence, 379 residues long: Beta sliding clamp (379 aa).

Belongs to the beta sliding clamp family. As to quaternary structure, forms a ring-shaped head-to-tail homodimer around DNA which binds and tethers DNA polymerases and other proteins to the DNA. The DNA replisome complex has a single clamp-loading complex (3 tau and 1 each of delta, delta', psi and chi subunits) which binds 3 Pol III cores (1 core on the leading strand and 2 on the lagging strand) each with a beta sliding clamp dimer. Additional proteins in the replisome are other copies of gamma, psi and chi, Ssb, DNA helicase and RNA primase.

It is found in the cytoplasm. Its function is as follows. Confers DNA tethering and processivity to DNA polymerases and other proteins. Acts as a clamp, forming a ring around DNA (a reaction catalyzed by the clamp-loading complex) which diffuses in an ATP-independent manner freely and bidirectionally along dsDNA. Initially characterized for its ability to contact the catalytic subunit of DNA polymerase III (Pol III), a complex, multichain enzyme responsible for most of the replicative synthesis in bacteria; Pol III exhibits 3'-5' exonuclease proofreading activity. The beta chain is required for initiation of replication as well as for processivity of DNA replication. The protein is Beta sliding clamp (dnaN) of Rickettsia bellii (strain RML369-C).